Consider the following 821-residue polypeptide: Lysosomal beta glucosidase (821 aa).

The signal sequence occupies residues 1–24 (MKTIKSLFLLSLLIVNLLISSTYG). The propeptide occupies 25-69 (SSIRVSIVGGEEAEVIEKPRTFGNKRELKLEYSQIYPKKQLNQEN). 3 N-linked (GlcNAc...) asparagine glycosylation sites follow: N113, N146, and N266. Residue D363 is part of the active site. N-linked (GlcNAc...) asparagine glycosylation is found at N535, N555, N703, and N721.

It belongs to the glycosyl hydrolase 3 family. Post-translationally, glycosylated. The polyoligosaccharides are of the high-mannose type and are highly substituted with both phosphate and sulfate moieties.

The protein localises to the lysosome. The catalysed reaction is Hydrolysis of terminal, non-reducing beta-D-glucosyl residues with release of beta-D-glucose.. The polypeptide is Lysosomal beta glucosidase (gluA) (Dictyostelium discoideum (Social amoeba)).